The sequence spans 88 residues: Sec-independent protein translocase protein TatA (88 aa).

A helical transmembrane segment spans residues 1–21 (MGGISIWQLLIIAVIVVLLFG). Residues 41–88 (KAMGDENQKETNNAEKTTNDADFDTKNLAQKTSTEEKSTTESKNKEQV) form a disordered region. Composition is skewed to basic and acidic residues over residues 42–65 (AMGDENQKETNNAEKTTNDADFDT) and 73–88 (STEEKSTTESKNKEQV).

Belongs to the TatA/E family. As to quaternary structure, the Tat system comprises two distinct complexes: a TatABC complex, containing multiple copies of TatA, TatB and TatC subunits, and a separate TatA complex, containing only TatA subunits. Substrates initially bind to the TatABC complex, which probably triggers association of the separate TatA complex to form the active translocon.

The protein resides in the cell inner membrane. In terms of biological role, part of the twin-arginine translocation (Tat) system that transports large folded proteins containing a characteristic twin-arginine motif in their signal peptide across membranes. TatA could form the protein-conducting channel of the Tat system. The protein is Sec-independent protein translocase protein TatA of Proteus mirabilis (strain HI4320).